The chain runs to 116 residues: Protein Rev (116 aa).

2 positions are modified to phosphoserine; by host CK2: S5 and S8. The interval 18–26 is homomultimerization; it reads LIKFLYQSN. The interval 23 to 48 is disordered; sequence YQSNPPPKPEGTRQARRNRRRRWRER. The short motif at 34–50 is the Nuclear localization signal and RNA-binding (RRE) element; the sequence is TRQARRNRRRRWRERQR. Residues 36–47 show a composition bias toward basic residues; the sequence is QARRNRRRRWRE. Residues 73–84 carry the Nuclear export signal and binding to XPO1 motif; that stretch reads LQLPPLERLTLD. 2 positions are modified to phosphoserine; by host: S92 and S99. The interval 92-116 is disordered; that stretch reads SGTQGVGSPQILVESPTVLESGTKE.

Belongs to the HIV-1 REV protein family. In terms of assembly, homomultimer; when bound to the RRE. Multimeric assembly is essential for activity and may involve XPO1. Binds to human KPNB1, XPO1, TNPO1, RANBP5 and IPO7. Interacts with the viral Integrase. Interacts with human KHDRBS1. Interacts with human NAP1; this interaction decreases Rev multimerization and stimulates its activity. Interacts with human DEAD-box helicases DDX3 and DDX24; these interactions may serve for viral RNA export to the cytoplasm and packaging, respectively. Interacts with human PSIP1; this interaction may inhibit HIV-1 DNA integration by promoting dissociation of the Integrase-LEDGF/p75 complex. In terms of processing, asymmetrically arginine dimethylated at one site by host PRMT6. Methylation impairs the RNA-binding activity and export of viral RNA from the nucleus to the cytoplasm. Post-translationally, phosphorylated by protein kinase CK2. Presence of, and maybe binding to the N-terminus of the regulatory beta subunit of CK2 is necessary for CK2-mediated Rev's phosphorylation.

Its subcellular location is the host nucleus. It is found in the host nucleolus. The protein localises to the host cytoplasm. Escorts unspliced or incompletely spliced viral pre-mRNAs (late transcripts) out of the nucleus of infected cells. These pre-mRNAs carry a recognition sequence called Rev responsive element (RRE) located in the env gene, that is not present in fully spliced viral mRNAs (early transcripts). This function is essential since most viral proteins are translated from unspliced or partially spliced pre-mRNAs which cannot exit the nucleus by the pathway used by fully processed cellular mRNAs. Rev itself is translated from a fully spliced mRNA that readily exits the nucleus. Rev's nuclear localization signal (NLS) binds directly to KPNB1/Importin beta-1 without previous binding to KPNA1/Importin alpha-1. KPNB1 binds to the GDP bound form of RAN (Ran-GDP) and targets Rev to the nucleus. In the nucleus, the conversion from Ran-GDP to Ran-GTP dissociates Rev from KPNB1 and allows Rev's binding to the RRE in viral pre-mRNAs. Rev multimerization on the RRE via cooperative assembly exposes its nuclear export signal (NES) to the surface. Rev can then form a complex with XPO1/CRM1 and Ran-GTP, leading to nuclear export of the complex. Conversion from Ran-GTP to Ran-GDP mediates dissociation of the Rev/RRE/XPO1/RAN complex, so that Rev can return to the nucleus for a subsequent round of export. Beside KPNB1, also seems to interact with TNPO1/Transportin-1, RANBP5/IPO5 and IPO7/RANBP7 for nuclear import. The nucleoporin-like HRB/RIP is an essential cofactor that probably indirectly interacts with Rev to release HIV RNAs from the perinuclear region to the cytoplasm. The sequence is that of Protein Rev from Human immunodeficiency virus type 1 group M subtype B (isolate SC) (HIV-1).